Here is a 179-residue protein sequence, read N- to C-terminus: Dual-action ribosomal maturation protein DarP (179 aa).

It belongs to the DarP family.

The protein localises to the cytoplasm. In terms of biological role, member of a network of 50S ribosomal subunit biogenesis factors which assembles along the 30S-50S interface, preventing incorrect 23S rRNA structures from forming. Promotes peptidyl transferase center (PTC) maturation. In Erwinia tasmaniensis (strain DSM 17950 / CFBP 7177 / CIP 109463 / NCPPB 4357 / Et1/99), this protein is Dual-action ribosomal maturation protein DarP.